The following is a 76-amino-acid chain: Large ribosomal subunit protein eL20 (76 aa).

The protein belongs to the eukaryotic ribosomal protein eL20 family. In terms of assembly, part of the 50S ribosomal subunit. Binds 23S rRNA.

This chain is Large ribosomal subunit protein eL20, found in Methanococcus maripaludis (strain C7 / ATCC BAA-1331).